Consider the following 175-residue polypeptide: ATP synthase subunit b (175 aa).

The chain crosses the membrane as a helical span at residues 19–35 (GLIFWTTVTFLIVLFIL).

It belongs to the ATPase B chain family. In terms of assembly, F-type ATPases have 2 components, F(1) - the catalytic core - and F(0) - the membrane proton channel. F(1) has five subunits: alpha(3), beta(3), gamma(1), delta(1), epsilon(1). F(0) has four main subunits: a(1), b(2) and c(10-14). The alpha and beta chains form an alternating ring which encloses part of the gamma chain. F(1) is attached to F(0) by a central stalk formed by the gamma and epsilon chains, while a peripheral stalk is formed by the delta and b chains.

It is found in the cell inner membrane. In terms of biological role, f(1)F(0) ATP synthase produces ATP from ADP in the presence of a proton or sodium gradient. F-type ATPases consist of two structural domains, F(1) containing the extramembraneous catalytic core and F(0) containing the membrane proton channel, linked together by a central stalk and a peripheral stalk. During catalysis, ATP synthesis in the catalytic domain of F(1) is coupled via a rotary mechanism of the central stalk subunits to proton translocation. Functionally, component of the F(0) channel, it forms part of the peripheral stalk, linking F(1) to F(0). The protein is ATP synthase subunit b of Chlorobium phaeobacteroides (strain BS1).